The sequence spans 95 residues: MTSSLVIYIFLWSRLICQIFPCERPGQPFAYHILGEAKKKKNRKRENRTCSIGNTCTQTYTYTPYAKKARQQEKLWERRNERTYGANSQQTFEHT.

An N-terminal signal peptide occupies residues Met-1–Cys-17.

This is an uncharacterized protein from Saccharomyces cerevisiae (strain ATCC 204508 / S288c) (Baker's yeast).